Here is a 121-residue protein sequence, read N- to C-terminus: MGLFSKRQIGNQYETLAKQYLQRQGLRFLDQNYLTKFGEIDLIFQQDETIVFVEVKYRKNDHFGSAAEMVTNAKMRKLIKTAQVWLSQQRTMNTIDYRFDVIAIHDSGRDINWIQNAISEG.

It belongs to the UPF0102 family.

In Vibrio parahaemolyticus serotype O3:K6 (strain RIMD 2210633), this protein is UPF0102 protein VP0448.